We begin with the raw amino-acid sequence, 864 residues long: Leucine--tRNA ligase (864 aa).

The 'HIGH' region motif lies at Pro42–His52. Positions Lys624–Ser628 match the 'KMSKS' region motif. Lys627 is an ATP binding site.

This sequence belongs to the class-I aminoacyl-tRNA synthetase family.

The protein localises to the cytoplasm. It catalyses the reaction tRNA(Leu) + L-leucine + ATP = L-leucyl-tRNA(Leu) + AMP + diphosphate. The protein is Leucine--tRNA ligase of Burkholderia vietnamiensis (strain G4 / LMG 22486) (Burkholderia cepacia (strain R1808)).